A 1207-amino-acid polypeptide reads, in one-letter code: Chromosomal serine/threonine-protein kinase JIL-1 (1207 aa).

The segment covering 1–19 (MSRLQKQNYEILSGTSTSR) has biased composition (polar residues). Disordered regions lie at residues 1–119 (MSRL…ASAR), 164–183 (QDME…SSSL), and 210–230 (SSST…LDLD). Phosphoserine occurs at positions 29 and 31. Residues 45–69 (LNGQLVANGNGKTRKNSNSETMTNG) are compositionally biased toward polar residues. A compositionally biased stretch (low complexity) spans 88 to 97 (NYNNNNNNNN). Positions 98-108 (SISATNGQYTN) are enriched in polar residues. Positions 109–118 (SSSKTTSASA) are enriched in low complexity. The segment covering 164-178 (QDMEEDEPNGIEIDE) has biased composition (acidic residues). The span at 213–226 (TTPSYAMPTSNSTP) shows a compositional bias: polar residues. The Protein kinase 1 domain occupies 261 to 530 (FKIIRVLGTG…ASEIKEHPFF (270 aa)). ATP contacts are provided by residues 267-275 (LGTGAYGRV) and K293. Residue D389 is the Proton acceptor of the active site. S424 carries the phosphoserine modification. An AGC-kinase C-terminal domain is found at 531–599 (NGINWQELRT…VAPEHLEQMR (69 aa)). T588 is modified (phosphothreonine). Positions 623 to 886 (LELGTRTSNG…LSDILDSEWL (264 aa)) constitute a Protein kinase 2 domain. Residues 629–637 (TSNGAYGTC) and K652 each bind ATP. The active-site Proton acceptor is D739. T1045 carries the phosphothreonine modification. At S1047 the chain carries Phosphoserine. The disordered stretch occupies residues 1168–1197 (TFPRPKAQLKRTKREPKVPRPPTRVQPERA).

Belongs to the protein kinase superfamily. Ser/Thr protein kinase family. In terms of assembly, interacts with lola. Interacts with proteins of the male specific lethal (MSL) dosage compensation complex; this interaction is mediated by the kinase domains. Requires Mg(2+) as cofactor. Autophosphorylated in vitro.

It localises to the nucleus. The protein localises to the chromosome. It carries out the reaction L-seryl-[protein] + ATP = O-phospho-L-seryl-[protein] + ADP + H(+). The enzyme catalyses L-threonyl-[protein] + ATP = O-phospho-L-threonyl-[protein] + ADP + H(+). Functionally, phosphorylates 'Ser-10' of histone H3. May regulate gene expression by establishing or maintaining the structure of more open chromatin regions. Also required for normal polytene chromosome structure, for oogenesis and for viability throughout development. Regulates the structure of polytene chromosomes in salivary glands. May phosphorylate 'Ser-1' of histone H2A. This is Chromosomal serine/threonine-protein kinase JIL-1 from Drosophila melanogaster (Fruit fly).